The primary structure comprises 229 residues: Urease accessory protein UreF (229 aa).

This sequence belongs to the UreF family. In terms of assembly, ureD, UreF and UreG form a complex that acts as a GTP-hydrolysis-dependent molecular chaperone, activating the urease apoprotein by helping to assemble the nickel containing metallocenter of UreC. The UreE protein probably delivers the nickel.

It is found in the cytoplasm. Functionally, required for maturation of urease via the functional incorporation of the urease nickel metallocenter. The polypeptide is Urease accessory protein UreF (Staphylococcus epidermidis (strain ATCC 35984 / DSM 28319 / BCRC 17069 / CCUG 31568 / BM 3577 / RP62A)).